Here is a 217-residue protein sequence, read N- to C-terminus: Octanoyltransferase (217 aa).

Residues 32–207 (DDSADEIWLV…HMIKKLNATQ (176 aa)) form the BPL/LPL catalytic domain. Residues 71–78 (RGGQVTYH), 138–140 (SLG), and 151–153 (GLA) contribute to the substrate site. Cysteine 169 functions as the Acyl-thioester intermediate in the catalytic mechanism.

This sequence belongs to the LipB family.

Its subcellular location is the cytoplasm. It carries out the reaction octanoyl-[ACP] + L-lysyl-[protein] = N(6)-octanoyl-L-lysyl-[protein] + holo-[ACP] + H(+). It functions in the pathway protein modification; protein lipoylation via endogenous pathway; protein N(6)-(lipoyl)lysine from octanoyl-[acyl-carrier-protein]: step 1/2. Functionally, catalyzes the transfer of endogenously produced octanoic acid from octanoyl-acyl-carrier-protein onto the lipoyl domains of lipoate-dependent enzymes. Lipoyl-ACP can also act as a substrate although octanoyl-ACP is likely to be the physiological substrate. This Pseudoalteromonas translucida (strain TAC 125) protein is Octanoyltransferase.